Here is a 421-residue protein sequence, read N- to C-terminus: D-amino acid dehydrogenase (421 aa).

4–18 (VLVLGSGVVGLTSAW) contacts FAD.

This sequence belongs to the DadA oxidoreductase family. The cofactor is FAD.

It catalyses the reaction a D-alpha-amino acid + A + H2O = a 2-oxocarboxylate + AH2 + NH4(+). Functionally, oxidative deamination of D-amino acids. This Vibrio cholerae serotype O1 (strain ATCC 39315 / El Tor Inaba N16961) protein is D-amino acid dehydrogenase.